Reading from the N-terminus, the 409-residue chain is Arginine deiminase (409 aa).

Cys-399 serves as the catalytic Amidino-cysteine intermediate.

Belongs to the arginine deiminase family.

It localises to the cytoplasm. It catalyses the reaction L-arginine + H2O = L-citrulline + NH4(+). It participates in amino-acid degradation; L-arginine degradation via ADI pathway; carbamoyl phosphate from L-arginine: step 1/2. The sequence is that of Arginine deiminase from Streptococcus pneumoniae (strain JJA).